We begin with the raw amino-acid sequence, 487 residues long: 7-deoxyloganetin glucosyltransferase (487 aa).

The Proton acceptor role is filled by H25. Position 25 (H25) interacts with an anthocyanidin. The active-site Charge relay is the D129. Positions 151, 366, 381, 384, 385, 386, and 389 each coordinate UDP-alpha-D-glucose. Residue A404 participates in an anthocyanidin binding. Positions 405 and 406 each coordinate UDP-alpha-D-glucose.

Belongs to the UDP-glycosyltransferase family. In terms of tissue distribution, expressed in roots.

The catalysed reaction is 7-deoxyloganetin + UDP-alpha-D-glucose = 7-deoxyloganin + UDP + H(+). Functionally, iridoid glucosyltransferase acting exclusively on 7-deoxyloganetin. No activity with 7-deoxyloganetic acid. This chain is 7-deoxyloganetin glucosyltransferase (UGT85A23), found in Catharanthus roseus (Madagascar periwinkle).